We begin with the raw amino-acid sequence, 418 residues long: Tyrosine--tRNA ligase (418 aa).

Residue Tyr-34 coordinates L-tyrosine. A 'HIGH' region motif is present at residues Pro-39–His-48. L-tyrosine is bound by residues Tyr-169 and Gln-173. A 'KMSKS' region motif is present at residues Lys-229–Ser-233. Lys-232 contacts ATP. Residues Asn-352–Tyr-418 form the S4 RNA-binding domain.

This sequence belongs to the class-I aminoacyl-tRNA synthetase family. TyrS type 1 subfamily. In terms of assembly, homodimer.

It is found in the cytoplasm. It catalyses the reaction tRNA(Tyr) + L-tyrosine + ATP = L-tyrosyl-tRNA(Tyr) + AMP + diphosphate + H(+). In terms of biological role, catalyzes the attachment of tyrosine to tRNA(Tyr) in a two-step reaction: tyrosine is first activated by ATP to form Tyr-AMP and then transferred to the acceptor end of tRNA(Tyr). The polypeptide is Tyrosine--tRNA ligase (Streptococcus pneumoniae (strain 70585)).